Reading from the N-terminus, the 361-residue chain is Cytosolic Fe-S cluster assembly factor CFD1 (361 aa).

Residue 37-44 participates in ATP binding; the sequence is GKGGVGKS. [4Fe-4S] cluster contacts are provided by Cys-218 and Cys-221. Positions 293 to 314 are disordered; it reads HSQSAAAQLPNSGDTESLTPAG.

This sequence belongs to the Mrp/NBP35 ATP-binding proteins family. NUBP2/CFD1 subfamily. As to quaternary structure, heterotetramer of 2 NBP35 and 2 CFD1 chains. The cofactor is [4Fe-4S] cluster.

The protein resides in the cytoplasm. Its function is as follows. Component of the cytosolic iron-sulfur (Fe/S) protein assembly (CIA) machinery. Required for maturation of extramitochondrial Fe-S proteins. The NBP35-CFD1 heterotetramer forms a Fe-S scaffold complex, mediating the de novo assembly of an Fe-S cluster and its transfer to target apoproteins. The sequence is that of Cytosolic Fe-S cluster assembly factor CFD1 from Mycosarcoma maydis (Corn smut fungus).